Consider the following 511-residue polypeptide: Protein HESO1 (511 aa).

The disordered stretch occupies residues Ala-378–Gln-511. The segment covering Gln-381–Ser-392 has biased composition (low complexity). The span at Leu-404–Gly-465 shows a compositional bias: polar residues.

This sequence belongs to the DNA polymerase type-B-like family.

It localises to the cytoplasm. It is found in the P-body. The protein localises to the nucleus. The catalysed reaction is RNA(n) + UTP = RNA(n)-3'-uridine ribonucleotide + diphosphate. Completely inhibited by 2'-O-methylation on the substrate RNA. Functionally, uridylates small RNAs to trigger their degradation. Catalyzes the uridylation of 5' fragments produced by AGO1-mediated cleavage of miRNA target RNAs. Acts synergistically with URT1 in unmethylated miRNA uridylation, leading to their degradation. URT1 and HESO1 prefer substrates with different 3' end nucleotides and act cooperatively to tail different forms of the same miRNAs. URT1 and HESO1 act sequentially, with URT1 mono-uridylating the miRNAs followed by their further uridylation by HESO1. URT1 and HESO1 are involved in the uridylation and clearance of RISC-generated 5' mRNA fragments. Able to act on AGO1-bound miRNAs and the uridylated species stay associated with AGO1. This chain is Protein HESO1, found in Arabidopsis thaliana (Mouse-ear cress).